A 312-amino-acid polypeptide reads, in one-letter code: Phosphatidate cytidylyltransferase (312 aa).

The segment at 1–31 is disordered; it reads MASTDPGTGTPLDESVPGIKRAMRQSTKNTP. 8 helical membrane-spanning segments follow: residues 37–57, 58–78, 85–105, 110–130, 157–177, 186–206, 223–243, and 247–267; these read LPAAIAVGLSIGGVLVATLVF, APRIWVVLCAGAIFVASHEVV, GYVIPAIPLLIGGQFTVWLTW, VGALAGFGATVVVCMIWRLVM, ATVFLAAWVPLFASFAALLVY, FCLMIAVVASDVGGYTVGVLF, GFAGSLVCGTTATILTATFLA, and PWVGALLSFVLVLTCTLGDLV.

The protein belongs to the CDS family.

It is found in the cell membrane. The catalysed reaction is a 1,2-diacyl-sn-glycero-3-phosphate + CTP + H(+) = a CDP-1,2-diacyl-sn-glycerol + diphosphate. It functions in the pathway phospholipid metabolism; CDP-diacylglycerol biosynthesis; CDP-diacylglycerol from sn-glycerol 3-phosphate: step 3/3. The polypeptide is Phosphatidate cytidylyltransferase (cdsA) (Mycobacterium leprae (strain TN)).